Here is a 157-residue protein sequence, read N- to C-terminus: Probable succinate transporter subunit YjjB (157 aa).

4 consecutive transmembrane segments (helical) span residues phenylalanine 6 to methionine 26, alanine 55 to isoleucine 75, valine 87 to isoleucine 107, and phenylalanine 129 to tryptophan 149.

Belongs to the ThrE exporter (TC 2.A.79) family. As to quaternary structure, the transporter is composed of YjjB and YjjP.

The protein resides in the cell inner membrane. In terms of biological role, involved in succinate export with YjjP. Both proteins are required for export. This is Probable succinate transporter subunit YjjB from Salmonella arizonae (strain ATCC BAA-731 / CDC346-86 / RSK2980).